A 154-amino-acid chain; its full sequence is Superoxide dismutase [Cu-Zn] (154 aa).

Residues H47, H49, and H64 each contribute to the Cu cation site. A disulfide bridge connects residues C58 and C147. The segment at 62–89 is disordered; sequence GPHFNPFKKNHGGPTDSERHVGDLGNVK. The Zn(2+) site is built by H64, H72, H81, and D84. H121 is a Cu cation binding site. Position 144 (R144) interacts with substrate.

Belongs to the Cu-Zn superoxide dismutase family. As to quaternary structure, homodimer. Requires Cu cation as cofactor. Zn(2+) is required as a cofactor.

It is found in the cytoplasm. It catalyses the reaction 2 superoxide + 2 H(+) = H2O2 + O2. Functionally, destroys radicals which are normally produced within the cells and which are toxic to biological systems. The protein is Superoxide dismutase [Cu-Zn] (SOD1) of Yarrowia lipolytica (strain CLIB 122 / E 150) (Yeast).